The following is a 299-amino-acid chain: Protoheme IX farnesyltransferase (299 aa).

8 consecutive transmembrane segments (helical) span residues 24 to 44 (VVAL…DQGM), 46 to 66 (WNAL…AAAI), 94 to 114 (VHAL…LAWG), 118 to 138 (LTAW…TLFL), 146 to 166 (IVLG…SVTG), 172 to 192 (ALLL…ALAV), 232 to 252 (LPFI…ALGV), and 278 to 298 (ITYL…PVTL).

The protein belongs to the UbiA prenyltransferase family. Protoheme IX farnesyltransferase subfamily.

The protein localises to the cell inner membrane. It carries out the reaction heme b + (2E,6E)-farnesyl diphosphate + H2O = Fe(II)-heme o + diphosphate. The protein operates within porphyrin-containing compound metabolism; heme O biosynthesis; heme O from protoheme: step 1/1. Converts heme B (protoheme IX) to heme O by substitution of the vinyl group on carbon 2 of heme B porphyrin ring with a hydroxyethyl farnesyl side group. The sequence is that of Protoheme IX farnesyltransferase from Hahella chejuensis (strain KCTC 2396).